Here is a 152-residue protein sequence, read N- to C-terminus: MYMDRHCVYYRKPLLESGTLGTKGNIQVVIPFLTESYSSSQDPPEKSIPICTLKNFPNAIEHTLQWARDEFESLFKQPAENVNQYLTNPKFVERTLRLGGTQPLEVLEAVHRSLVLQRPHDWADCVTWACLHWHSQYANNIRQLLHNFPPEQ.

The active-site Glycyl thioester intermediate is Cys51.

The protein belongs to the ubiquitin-activating E1 family. In terms of assembly, monomer.

It carries out the reaction ATP + ubiquitin + [E1 ubiquitin-activating enzyme]-L-cysteine = AMP + diphosphate + S-ubiquitinyl-[E1 ubiquitin-activating enzyme]-L-cysteine.. It participates in protein modification; protein ubiquitination. Functionally, activates ubiquitin by first adenylating its C-terminal glycine residue with ATP, and thereafter linking this residue to the side chain of a cysteine residue in E1, yielding a ubiquitin-E1 thioester and free AMP. The Y chromosome form could be involved in the survival and proliferation of differentiating spermatogonia. The protein is Ubiquitin-activating enzyme E1 Y (UBE1Y) of Osphranter rufus (Red kangaroo).